The following is a 1218-amino-acid chain: Coatomer subunit alpha-2 (1218 aa).

WD repeat units follow at residues 7–48 (TKSN…DRFD), 49–88 (EHEGPVRGVHFHNSQPLFVSGGDDYKIKVWNYKTHRCLFT), 91–132 (GHLD…SVLT), 133–172 (GHNHYVMCASFHPKEDLVVSASLDQTVRVWDIGALKKKSA), 202–241 (GHDRGVNWASFHPTLPLIVSGADDRQVKLWRMNETKAWEV), 246–285 (GHMNNVSSVMFHAKQDIIVSNSEDKSIRVWDATKRTGIQT), 288–326 (REHDRFWILAVHPEINLLAAGHDNGMIVFKLERERPAFA), and 363–404 (SLNQ…VGRS). The segment at 826–849 (NRGAVDEEEEDVEGDWGEGLDKFD) is disordered. Residues 831–843 (DEEEEDVEGDWGE) show a composition bias toward acidic residues.

Oligomeric complex that consists of at least the alpha, beta, beta', gamma, delta, epsilon and zeta subunits.

Its subcellular location is the cytoplasm. The protein localises to the golgi apparatus membrane. It is found in the cytoplasmic vesicle. It localises to the COPI-coated vesicle membrane. The coatomer is a cytosolic protein complex that binds to dilysine motifs and reversibly associates with Golgi non-clathrin-coated vesicles, which further mediate biosynthetic protein transport from the ER, via the Golgi up to the trans Golgi network. Coatomer complex is required for budding from Golgi membranes, and is essential for the retrograde Golgi-to-ER transport of dilysine-tagged proteins. This is Coatomer subunit alpha-2 from Arabidopsis thaliana (Mouse-ear cress).